The following is a 446-amino-acid chain: Exodeoxyribonuclease 7 large subunit (446 aa).

This sequence belongs to the XseA family. As to quaternary structure, heterooligomer composed of large and small subunits.

It localises to the cytoplasm. The enzyme catalyses Exonucleolytic cleavage in either 5'- to 3'- or 3'- to 5'-direction to yield nucleoside 5'-phosphates.. Its function is as follows. Bidirectionally degrades single-stranded DNA into large acid-insoluble oligonucleotides, which are then degraded further into small acid-soluble oligonucleotides. This is Exodeoxyribonuclease 7 large subunit from Vibrio cholerae serotype O1 (strain ATCC 39541 / Classical Ogawa 395 / O395).